The following is a 616-amino-acid chain: Mitochondrial Rho GTPase 2 (616 aa).

Residues 1-590 (MKRDVRILLL…HDTELSTASF (590 aa)) lie on the Cytoplasmic side of the membrane. The Miro 1 domain maps to 2-168 (KRDVRILLLG…FYYAQKAVLH (167 aa)). G16, K17, T18, and S19 together coordinate GTP. Residue T18 coordinates Mg(2+). Position 57 (D57) interacts with Mg(2+). GTP-binding residues include S59, N118, K119, D121, A149, and K150. EF-hand domains follow at residues 184–219 (QCKK…CFGN) and 304–339 (FGYQ…FPYT). Residues D199, N201, E208, D317, D319, D321, and E328 each contribute to the Ca(2+) site. The 162-residue stretch at 416-577 (RNVFLCRVIG…YSKLATAAAF (162 aa)) folds into the Miro 2 domain. Residues G428, G430, K431, S432, and A433 each coordinate GTP. S432 provides a ligand contact to Mg(2+). Position 474 (E474) interacts with Mg(2+). GTP is bound by residues K528, D530, and C559. Residues 591 to 613 (WLRVALGATVAAVVGFTLYKALL) traverse the membrane as a helical; Anchor for type IV membrane protein segment. At 614–616 (RSK) the chain is on the mitochondrial intermembrane side.

It belongs to the mitochondrial Rho GTPase family. In terms of assembly, homodimer.

It is found in the mitochondrion outer membrane. It carries out the reaction GTP + H2O = GDP + phosphate + H(+). The catalysed reaction is ATP + H2O = ADP + phosphate + H(+). The enzyme catalyses UTP + H2O = UDP + phosphate + H(+). Functionally, atypical mitochondrial nucleoside-triphosphatase (NTPase) involved in mitochondrial trafficking. Probably involved in control of anterograde transport of mitochondria and their subcellular distribution. Can hydrolyze GTP, ATP and UTP. This chain is Mitochondrial Rho GTPase 2 (rhot2), found in Xenopus tropicalis (Western clawed frog).